The sequence spans 60 residues: Cytotoxin 6 (60 aa).

Cystine bridges form between cysteine 3/cysteine 21, cysteine 14/cysteine 38, cysteine 42/cysteine 53, and cysteine 54/cysteine 59.

This sequence belongs to the three-finger toxin family. Short-chain subfamily. Type IA cytotoxin sub-subfamily. As to quaternary structure, monomer in solution; Homodimer and oligomer in the presence of negatively charged lipids forming a pore with a size ranging between 20 and 30 Angstroms. Expressed by the venom gland.

It localises to the secreted. Its subcellular location is the target cell membrane. Functionally, shows cytolytic activity on many different cells by forming pore in lipid membranes. In vivo, increases heart rate or kills the animal by cardiac arrest. In addition, it binds to heparin with high affinity, interacts with Kv channel-interacting protein 1 (KCNIP1) in a calcium-independent manner, and binds to integrin alpha-V/beta-3 (ITGAV/ITGB3) with moderate affinity. The polypeptide is Cytotoxin 6 (Naja annulifera (Banded Egyptian cobra)).